The following is a 609-amino-acid chain: Adenine deaminase (609 aa).

It belongs to the metallo-dependent hydrolases superfamily. Adenine deaminase family. The cofactor is Mn(2+).

It catalyses the reaction adenine + H2O + H(+) = hypoxanthine + NH4(+). This chain is Adenine deaminase, found in Cenarchaeum symbiosum (strain A).